The sequence spans 367 residues: Heme A synthase (367 aa).

5 consecutive transmembrane segments (helical) span residues 12-32 (GAVR…VAVG), 99-119 (LLGR…WWQG), 127-147 (LGLL…WIMV), 163-183 (LALH…LAAG), and 198-218 (ATAL…GLVA). His-264 is a heme binding site. Helical transmembrane passes span 266-286 (VTAY…RLTG), 296-316 (GVVI…LLAV), and 317-337 (PLWA…MATV). A heme-binding site is contributed by His-324.

The protein belongs to the COX15/CtaA family. Type 2 subfamily. Interacts with CtaB. Heme b serves as cofactor.

Its subcellular location is the cell membrane. The catalysed reaction is Fe(II)-heme o + 2 A + H2O = Fe(II)-heme a + 2 AH2. It functions in the pathway porphyrin-containing compound metabolism; heme A biosynthesis; heme A from heme O: step 1/1. Catalyzes the conversion of heme O to heme A by two successive hydroxylations of the methyl group at C8. The first hydroxylation forms heme I, the second hydroxylation results in an unstable dihydroxymethyl group, which spontaneously dehydrates, resulting in the formyl group of heme A. The polypeptide is Heme A synthase (Methylobacterium radiotolerans (strain ATCC 27329 / DSM 1819 / JCM 2831 / NBRC 15690 / NCIMB 10815 / 0-1)).